The chain runs to 259 residues: Chloroplastic group IIB intron splicing facilitator CRS2, chloroplastic (259 aa).

Positions 1 to 21 (MSLAVATPASARLSPLTTSSP) are disordered. Residues 1–49 (MSLAVATPASARLSPLTTSSPEPCRRRRLLLSAAAPLRRTRLRRRIAVV) constitute a chloroplast transit peptide. Tyr77 lines the tRNA pocket. His82 functions as the Proton acceptor in the catalytic mechanism. Positions 127, 129, and 175 each coordinate tRNA.

It belongs to the PTH family. CRS2 subfamily. In terms of assembly, part of large ribonucleo-protein complexes that include group IIB introns and either CAF1 or CAF2.

It is found in the plastid. Its subcellular location is the chloroplast stroma. Required for the splicing of group IIB introns in chloroplasts. The chain is Chloroplastic group IIB intron splicing facilitator CRS2, chloroplastic from Oryza sativa subsp. japonica (Rice).